The following is a 250-amino-acid chain: uncharacterized protein (250 aa).

A divalent metal cation contacts are provided by Glu97, Glu99, and Asp128.

The protein belongs to the FAH family.

This is an uncharacterized protein from Archaeoglobus fulgidus (strain ATCC 49558 / DSM 4304 / JCM 9628 / NBRC 100126 / VC-16).